A 328-amino-acid polypeptide reads, in one-letter code: UPF0285 protein MJ1370 (328 aa).

The protein belongs to the UPF0285 family.

The protein is UPF0285 protein MJ1370 of Methanocaldococcus jannaschii (strain ATCC 43067 / DSM 2661 / JAL-1 / JCM 10045 / NBRC 100440) (Methanococcus jannaschii).